Reading from the N-terminus, the 266-residue chain is Ribonuclease HII (266 aa).

Positions 19-38 are disordered; that stretch reads HPGMIRDKEKPAPTKPGKGV. Residues 58-246 form the RNase H type-2 domain; the sequence is WPVAGCDEAG…VVAARQKHQP (189 aa). Residues Asp64, Glu65, and Asp155 each coordinate a divalent metal cation.

The protein belongs to the RNase HII family. The cofactor is Mn(2+). Mg(2+) serves as cofactor.

It localises to the cytoplasm. It carries out the reaction Endonucleolytic cleavage to 5'-phosphomonoester.. Its function is as follows. Endonuclease that specifically degrades the RNA of RNA-DNA hybrids. The sequence is that of Ribonuclease HII from Rhodopseudomonas palustris (strain BisB18).